Consider the following 210-residue polypeptide: Kinetochore protein Spc25 (210 aa).

A coiled-coil region spans residues Thr42 to Ile106.

It belongs to the SPC25 family. In terms of assembly, component of the Ndc80 complex, which is composed of Ndc80, Nuf2 and Spc25.

It is found in the nucleus. The protein resides in the chromosome. Its subcellular location is the centromere. The protein localises to the kinetochore. Functionally, acts as a component of the essential kinetochore-associated Ndc80 complex, which is required for chromosome segregation and spindle checkpoint activity during meiosis and mitosis. Required for kinetochore integrity and the organization of stable microtubule binding sites in the outer plate of the kinetochore. Participates in SAC signaling that responds specifically to disruptions in spindle microtubule dynamics. The NDC80 complex synergistically enhances the affinity of the SKA1 complex for microtubules and may allow the NDC80 complex to track depolymerizing microtubules. This chain is Kinetochore protein Spc25, found in Drosophila virilis (Fruit fly).